The following is a 541-amino-acid chain: Chaperonin GroEL (541 aa).

ATP is bound by residues 29 to 32 (TLGP), 86 to 90 (DGTTT), Gly413, and Asp495.

Forms a cylinder of 14 subunits composed of two heptameric rings stacked back-to-back. Interacts with the co-chaperonin GroES.

The protein resides in the cytoplasm. The enzyme catalyses ATP + H2O + a folded polypeptide = ADP + phosphate + an unfolded polypeptide.. Its function is as follows. Together with its co-chaperonin GroES, plays an essential role in assisting protein folding. The GroEL-GroES system forms a nano-cage that allows encapsulation of the non-native substrate proteins and provides a physical environment optimized to promote and accelerate protein folding. The chain is Chaperonin GroEL from Thermoanaerobacter brockii (Thermoanaerobium brockii).